The sequence spans 425 residues: Serine--tRNA ligase (425 aa).

229-231 (TSE) serves as a coordination point for L-serine. Residues 259–261 (RKE) and Val275 each bind ATP. Residue Glu282 coordinates L-serine. 349–352 (EVTS) is a binding site for ATP. Residue Thr384 participates in L-serine binding.

It belongs to the class-II aminoacyl-tRNA synthetase family. Type-1 seryl-tRNA synthetase subfamily. Homodimer. The tRNA molecule binds across the dimer.

It localises to the cytoplasm. It carries out the reaction tRNA(Ser) + L-serine + ATP = L-seryl-tRNA(Ser) + AMP + diphosphate + H(+). The enzyme catalyses tRNA(Sec) + L-serine + ATP = L-seryl-tRNA(Sec) + AMP + diphosphate + H(+). It participates in aminoacyl-tRNA biosynthesis; selenocysteinyl-tRNA(Sec) biosynthesis; L-seryl-tRNA(Sec) from L-serine and tRNA(Sec): step 1/1. Catalyzes the attachment of serine to tRNA(Ser). Is also able to aminoacylate tRNA(Sec) with serine, to form the misacylated tRNA L-seryl-tRNA(Sec), which will be further converted into selenocysteinyl-tRNA(Sec). This chain is Serine--tRNA ligase, found in Borreliella burgdorferi (strain ATCC 35210 / DSM 4680 / CIP 102532 / B31) (Borrelia burgdorferi).